The sequence spans 279 residues: MSAIIELKKVTFNYHKDQEKPTLDGVSFHVKQGEWLSIIGHNGSGKSTTIRLIDGLLEPESGSIIVDGDLLTITNVWEIRHKIGMVFQNPDNQFVGATVEDDVAFGLENKGIAHEDIKERVNHALELVGMQNFKEKEPARLSGGQKQRVAIAGAVAMKPKIIILDEATSMLDPKGRLELIKTIKNIRDDYQLTVISITHDLDEVALSDRVLVMKDGQVESTSTPEQLFARGDELLQLGLDIPFTTSVVQMLQEEGYPVDYGYLTEKELENQLCQLISKM.

An ABC transporter domain is found at 5 to 240 (IELKKVTFNY…GDELLQLGLD (236 aa)). 40 to 47 (GHNGSGKS) provides a ligand contact to ATP.

This sequence belongs to the ABC transporter superfamily. Energy-coupling factor EcfA family. In terms of assembly, forms a stable energy-coupling factor (ECF) transporter complex composed of 2 membrane-embedded substrate-binding proteins (S component), 2 ATP-binding proteins (A component) and 2 transmembrane proteins (T component).

It localises to the cell membrane. Functionally, ATP-binding (A) component of a common energy-coupling factor (ECF) ABC-transporter complex. Unlike classic ABC transporters this ECF transporter provides the energy necessary to transport a number of different substrates. The protein is Energy-coupling factor transporter ATP-binding protein EcfA1 of Streptococcus pyogenes serotype M28 (strain MGAS6180).